A 365-amino-acid chain; its full sequence is Peridinin-chlorophyll a-binding protein, chloroplastic (365 aa).

A chloroplast-targeting transit peptide spans 1 to 52 (MVRGARKAIAVGVAVAVACGLQKHLNFVPGPRHAAPVAAAAASMMMAPAAFA). 2 consecutive repeat copies span residues 53–215 (DEIG…VPSG) and 216–365 (DKIG…ASQR).

As to quaternary structure, monomer.

Its subcellular location is the plastid. It localises to the chloroplast. Its function is as follows. Water-soluble antenna for capture of solar energy in the blue-green range. Peridinin is an asymmetric carotenoid. This Symbiodinium sp. (Dinoflagellate) protein is Peridinin-chlorophyll a-binding protein, chloroplastic.